Reading from the N-terminus, the 135-residue chain is Small ribosomal subunit protein uS8 (135 aa).

It belongs to the universal ribosomal protein uS8 family. As to quaternary structure, part of the 30S ribosomal subunit. Contacts proteins S5 and S12.

Its function is as follows. One of the primary rRNA binding proteins, it binds directly to 16S rRNA central domain where it helps coordinate assembly of the platform of the 30S subunit. The protein is Small ribosomal subunit protein uS8 of Salinispora arenicola (strain CNS-205).